A 570-amino-acid chain; its full sequence is Adenine deaminase (570 aa).

This sequence belongs to the metallo-dependent hydrolases superfamily. Adenine deaminase family. It depends on Mn(2+) as a cofactor.

The catalysed reaction is adenine + H2O + H(+) = hypoxanthine + NH4(+). The polypeptide is Adenine deaminase (Petrotoga mobilis (strain DSM 10674 / SJ95)).